The primary structure comprises 411 residues: Serine hydroxymethyltransferase (411 aa).

G120–L122 contacts (6S)-5,6,7,8-tetrahydrofolate. K225 is subject to N6-(pyridoxal phosphate)lysine. (6S)-5,6,7,8-tetrahydrofolate contacts are provided by residues E241 and S350–F352.

This sequence belongs to the SHMT family. In terms of assembly, homodimer. Requires pyridoxal 5'-phosphate as cofactor.

It is found in the cytoplasm. The enzyme catalyses (6R)-5,10-methylene-5,6,7,8-tetrahydrofolate + glycine + H2O = (6S)-5,6,7,8-tetrahydrofolate + L-serine. The protein operates within one-carbon metabolism; tetrahydrofolate interconversion. It participates in amino-acid biosynthesis; glycine biosynthesis; glycine from L-serine: step 1/1. Functionally, catalyzes the reversible interconversion of serine and glycine with tetrahydrofolate (THF) serving as the one-carbon carrier. This reaction serves as the major source of one-carbon groups required for the biosynthesis of purines, thymidylate, methionine, and other important biomolecules. Also exhibits THF-independent aldolase activity toward beta-hydroxyamino acids, producing glycine and aldehydes, via a retro-aldol mechanism. The protein is Serine hydroxymethyltransferase of Limosilactobacillus fermentum (strain NBRC 3956 / LMG 18251) (Lactobacillus fermentum).